An 803-amino-acid chain; its full sequence is Translation initiation factor IF-2 (803 aa).

2 disordered regions span residues 95-125 (PVVEQKRETEPAPTQEVPLTSDTTNLNEKAE) and 138-178 (EVKE…EREE). Residues 111 to 121 (VPLTSDTTNLN) show a composition bias toward polar residues. Over residues 138–155 (EVKEEAKKTPSEKKETPK) the composition is skewed to basic and acidic residues. A compositionally biased stretch (basic residues) spans 156–167 (KGPRKETRRSRK). The span at 168–178 (PDKEDKWEREE) shows a compositional bias: basic and acidic residues. In terms of domain architecture, tr-type G spans 302 to 471 (PRAPVVTIMG…LLQAEVLELK (170 aa)). The interval 311–318 (GHVDHGKT) is G1. 311-318 (GHVDHGKT) contributes to the GTP binding site. The G2 stretch occupies residues 336–340 (GITQH). The interval 357–360 (DTPG) is G3. GTP contacts are provided by residues 357–361 (DTPGH) and 411–414 (NKID). Residues 411–414 (NKID) are G4. The interval 447–449 (SAK) is G5.

Belongs to the TRAFAC class translation factor GTPase superfamily. Classic translation factor GTPase family. IF-2 subfamily.

It localises to the cytoplasm. One of the essential components for the initiation of protein synthesis. Protects formylmethionyl-tRNA from spontaneous hydrolysis and promotes its binding to the 30S ribosomal subunits. Also involved in the hydrolysis of GTP during the formation of the 70S ribosomal complex. In Coxiella burnetii (strain RSA 331 / Henzerling II), this protein is Translation initiation factor IF-2.